The sequence spans 365 residues: UDP-N-acetylglucosamine--N-acetylmuramyl-(pentapeptide) pyrophosphoryl-undecaprenol N-acetylglucosamine transferase (365 aa).

Residues 19–21 (TGG), Asn131, Arg170, Ser201, Ile255, 274–279 (ALTVTE), and Gln300 each bind UDP-N-acetyl-alpha-D-glucosamine.

The protein belongs to the glycosyltransferase 28 family. MurG subfamily.

It is found in the cell inner membrane. The enzyme catalyses di-trans,octa-cis-undecaprenyl diphospho-N-acetyl-alpha-D-muramoyl-L-alanyl-D-glutamyl-meso-2,6-diaminopimeloyl-D-alanyl-D-alanine + UDP-N-acetyl-alpha-D-glucosamine = di-trans,octa-cis-undecaprenyl diphospho-[N-acetyl-alpha-D-glucosaminyl-(1-&gt;4)]-N-acetyl-alpha-D-muramoyl-L-alanyl-D-glutamyl-meso-2,6-diaminopimeloyl-D-alanyl-D-alanine + UDP + H(+). Its pathway is cell wall biogenesis; peptidoglycan biosynthesis. In terms of biological role, cell wall formation. Catalyzes the transfer of a GlcNAc subunit on undecaprenyl-pyrophosphoryl-MurNAc-pentapeptide (lipid intermediate I) to form undecaprenyl-pyrophosphoryl-MurNAc-(pentapeptide)GlcNAc (lipid intermediate II). This is UDP-N-acetylglucosamine--N-acetylmuramyl-(pentapeptide) pyrophosphoryl-undecaprenol N-acetylglucosamine transferase from Acinetobacter baumannii (strain AB307-0294).